A 453-amino-acid polypeptide reads, in one-letter code: GTPase Der (453 aa).

EngA-type G domains follow at residues 4-169 (PIVA…PTQG) and 177-352 (TKIA…NEYQ). Residues 10 to 17 (GRPNVGKS), 57 to 61 (DTGGL), 120 to 123 (NKCE), 183 to 190 (GRPNVGKS), 230 to 234 (DTAGI), and 295 to 298 (NKWD) contribute to the GTP site. A KH-like domain is found at 353 to 438 (RRVTTSVINE…PIRLLWRGKK (86 aa)).

Belongs to the TRAFAC class TrmE-Era-EngA-EngB-Septin-like GTPase superfamily. EngA (Der) GTPase family. In terms of assembly, associates with the 50S ribosomal subunit.

Its function is as follows. GTPase that plays an essential role in the late steps of ribosome biogenesis. The polypeptide is GTPase Der (Trichodesmium erythraeum (strain IMS101)).